Consider the following 394-residue polypeptide: A-type flagellin (394 aa).

Belongs to the bacterial flagellin family. Post-translationally, phosphorylated on tyrosine residue(s). In terms of processing, flagellin from strain 5939 but not from strain 170018 is glycosylated.

It is found in the secreted. It localises to the bacterial flagellum. In terms of biological role, flagellin is the subunit protein which polymerizes to form the filaments of bacterial flagella. The protein is A-type flagellin (fliC) of Pseudomonas aeruginosa.